Reading from the N-terminus, the 283-residue chain is Nucleotide-binding protein ABBFA_002973 (283 aa).

9 to 16 (GQSGSGKS) contributes to the ATP binding site. Residue 59–62 (DVRS) coordinates GTP.

Belongs to the RapZ-like family.

In terms of biological role, displays ATPase and GTPase activities. The chain is Nucleotide-binding protein ABBFA_002973 from Acinetobacter baumannii (strain AB307-0294).